We begin with the raw amino-acid sequence, 239 residues long: Regulator of G-protein signaling 20 (239 aa).

Residues 1-29 are disordered; sequence MRTANGGPRARASPSASPADPGLPEGSER. The span at 8-19 shows a compositional bias: low complexity; it reads PRARASPSASPA. Residues 113–229 form the RGS domain; sequence SFDNLMVTPA…MNSTVYKDLL (117 aa).

In terms of assembly, forms a complex with G(alpha)z/i2 subunits and mu-opioid receptors; the formation of this complex results in mu-opioid receptor desensitization. Interacts with OPRM1. In terms of processing, fatty acylated. Heavily palmitoylated in the cysteine string motif. Post-translationally, N- and O-glycosylated in synapsomal membranes. Serine phosphorylated in synapsomal membranes. In terms of processing, sumoylated with SUMO1, SUMO2 and SUMO3. Sumoylation increases binding to the G-proteins, G(alpha)-i2 and G(z), and interaction with mu-opioid receptors.

Its subcellular location is the membrane. The protein resides in the nucleus. The protein localises to the cytoplasm. Functionally, inhibits signal transduction by increasing the GTPase activity of G protein alpha subunits thereby driving them into their inactive GDP-bound form. Binds selectively to G(z)-alpha and G(alpha)-i2 subunits, accelerates their GTPase activity and regulates their signaling activities. The G(z)-alpha activity is inhibited by the phosphorylation and palmitoylation of the G-protein. Negatively regulates mu-opioid receptor-mediated activation of the G-proteins. The chain is Regulator of G-protein signaling 20 (Rgs20) from Mus musculus (Mouse).